The chain runs to 389 residues: Tyrosine aminotransferase (389 aa).

Residue Lys-242 is modified to N6-(pyridoxal phosphate)lysine.

The protein belongs to the class-I pyridoxal-phosphate-dependent aminotransferase family. As to quaternary structure, homodimer. Requires pyridoxal 5'-phosphate as cofactor.

The catalysed reaction is L-tyrosine + 2-oxoglutarate = 3-(4-hydroxyphenyl)pyruvate + L-glutamate. It participates in amino-acid degradation; L-phenylalanine degradation; acetoacetate and fumarate from L-phenylalanine: step 2/6. Functionally, transaminase involved in tyrosine breakdown. Converts tyrosine to p-hydroxyphenylpyruvate. In Rhizobium meliloti (strain 1021) (Ensifer meliloti), this protein is Tyrosine aminotransferase (tatA).